The primary structure comprises 50 residues: Inter-alpha-trypsin inhibitor heavy chain H2 (50 aa).

It belongs to the ITIH family. In terms of assembly, I-alpha-I plasma protease inhibitors are assembled from one or two heavy chains (HC) and one light chain, bikunin. Inter-alpha-inhibitor (I-alpha-I) is composed of ITIH1/HC1, ITIH2/HC2 and bikunin. Phosphorylated by FAM20C in the extracellular medium.

It localises to the secreted. In terms of biological role, may act as a carrier of hyaluronan in serum or as a binding protein between hyaluronan and other matrix protein, including those on cell surfaces in tissues to regulate the localization, synthesis and degradation of hyaluronan which are essential to cells undergoing biological processes. This Bos taurus (Bovine) protein is Inter-alpha-trypsin inhibitor heavy chain H2 (ITIH2).